A 158-amino-acid polypeptide reads, in one-letter code: 6,7-dimethyl-8-ribityllumazine synthase (158 aa).

5-amino-6-(D-ribitylamino)uracil is bound by residues Phe22, 56–58 (ALE), and 80–82 (VVI). Position 85-86 (85-86 (ET)) interacts with (2S)-2-hydroxy-3-oxobutyl phosphate. The active-site Proton donor is the His88. A 5-amino-6-(D-ribitylamino)uracil-binding site is contributed by Asn113. Arg127 contributes to the (2S)-2-hydroxy-3-oxobutyl phosphate binding site.

This sequence belongs to the DMRL synthase family.

The catalysed reaction is (2S)-2-hydroxy-3-oxobutyl phosphate + 5-amino-6-(D-ribitylamino)uracil = 6,7-dimethyl-8-(1-D-ribityl)lumazine + phosphate + 2 H2O + H(+). It participates in cofactor biosynthesis; riboflavin biosynthesis; riboflavin from 2-hydroxy-3-oxobutyl phosphate and 5-amino-6-(D-ribitylamino)uracil: step 1/2. In terms of biological role, catalyzes the formation of 6,7-dimethyl-8-ribityllumazine by condensation of 5-amino-6-(D-ribitylamino)uracil with 3,4-dihydroxy-2-butanone 4-phosphate. This is the penultimate step in the biosynthesis of riboflavin. This is 6,7-dimethyl-8-ribityllumazine synthase from Neisseria meningitidis serogroup C (strain 053442).